Reading from the N-terminus, the 246-residue chain is Probable transcriptional regulatory protein CLK_2466 (246 aa).

This sequence belongs to the TACO1 family.

It is found in the cytoplasm. This Clostridium botulinum (strain Loch Maree / Type A3) protein is Probable transcriptional regulatory protein CLK_2466.